Here is a 415-residue protein sequence, read N- to C-terminus: Acetyl-CoA acetyltransferase 1 (415 aa).

Residue cysteine 99 is the Acyl-thioester intermediate of the active site. Residue lysine 239 participates in CoA binding. Alanine 256 is a binding site for K(+). Residue serine 260 coordinates CoA. Position 357 (valine 357) interacts with K(+). Residues histidine 361 and cysteine 391 each act as proton acceptor in the active site.

The protein belongs to the thiolase-like superfamily. Thiolase family. In terms of tissue distribution, expressed in the vascular system of roots, cotyledons, young leaves, fully expanded leaves, stems, flowers, and funiculi of siliques.

Its subcellular location is the cytoplasm. It localises to the peroxisome. The enzyme catalyses 2 acetyl-CoA = acetoacetyl-CoA + CoA. Its pathway is metabolic intermediate biosynthesis; (R)-mevalonate biosynthesis; (R)-mevalonate from acetyl-CoA: step 1/3. Catalyzes the condensation of two molecules of acetyl-CoA to produce acetoacetyl-CoA. The protein is Acetyl-CoA acetyltransferase 1 of Arabidopsis thaliana (Mouse-ear cress).